We begin with the raw amino-acid sequence, 363 residues long: dTDP-3-amino-3,6-dideoxy-alpha-D-galactopyranose transaminase (363 aa).

An N6-(pyridoxal phosphate)lysine modification is found at Lys-185.

This sequence belongs to the DegT/DnrJ/EryC1 family. Pyridoxal 5'-phosphate is required as a cofactor.

The catalysed reaction is dTDP-3-amino-3,6-dideoxy-alpha-D-galactopyranose + 2-oxoglutarate = dTDP-3-dehydro-6-deoxy-alpha-D-galactose + L-glutamate. In terms of biological role, specifically aminates dTDP-6-deoxy-D-xylohex-3-ulose to form dTDP-D-Fucp3N in the biosynthesis of dTDP-3-acetamido-3,6-dideoxy-alpha-D-galactose, a glycan chain of the S-layer. In Aneurinibacillus thermoaerophilus, this protein is dTDP-3-amino-3,6-dideoxy-alpha-D-galactopyranose transaminase (fdtB).